The primary structure comprises 325 residues: UPF0285 protein MM_0679 (325 aa).

Belongs to the UPF0285 family.

This is UPF0285 protein MM_0679 from Methanosarcina mazei (strain ATCC BAA-159 / DSM 3647 / Goe1 / Go1 / JCM 11833 / OCM 88) (Methanosarcina frisia).